Consider the following 456-residue polypeptide: MPLIKTPPPHGGKLVERVVKKRDIAEKMIAGCPTYELKPTTLPDGTPIRHVYREIMSVCYGFFSPVEGSMVQNELERVLNERRLLSEWIFPYPILFDISEEDYKALDVKEGDRLLLMLKGQPFATLDIEEVYKIDPVDVATRTFGTPEKNPEVVREPFDDKHPGYVIYKMHNPIILAGKYTIVNEPKFKEPYDRFWFPPSKCREVIKNEKKWRTVIAHQTRNVPHVGHEMLMKCAAYTGDIEPCHGILVNAIIGAKRRGDYPDEAILEGHEAVNKYGYIKPERHMVTFTLWDMRYGNPIESLLHGVIRQNMGCTHHMFGRDHAAVGEYYDMYATQILWSQGIPSFGFEAPPNEVDYGLKIIPQNMAEFWYCPICQEIAYSENCGHTDAKQKFSGSFLRGMVAEGVFPPRVVMRPEVYKQIVKWWKVYNYPFVNRKYLELKNKELEIDLPAMEVPKA.

The protein belongs to the sulfate adenylyltransferase family.

The enzyme catalyses sulfate + ATP + H(+) = adenosine 5'-phosphosulfate + diphosphate. It participates in sulfur metabolism; hydrogen sulfide biosynthesis; sulfite from sulfate: step 1/3. The chain is Sulfate adenylyltransferase (sat) from Archaeoglobus fulgidus (strain ATCC 49558 / DSM 4304 / JCM 9628 / NBRC 100126 / VC-16).